The primary structure comprises 154 residues: UPF0178 protein Sala_2376 (154 aa).

The protein belongs to the UPF0178 family.

This chain is UPF0178 protein Sala_2376, found in Sphingopyxis alaskensis (strain DSM 13593 / LMG 18877 / RB2256) (Sphingomonas alaskensis).